Consider the following 81-residue polypeptide: Small ribosomal subunit protein bS16 (81 aa).

This sequence belongs to the bacterial ribosomal protein bS16 family.

The chain is Small ribosomal subunit protein bS16 from Clostridium acetobutylicum (strain ATCC 824 / DSM 792 / JCM 1419 / IAM 19013 / LMG 5710 / NBRC 13948 / NRRL B-527 / VKM B-1787 / 2291 / W).